The sequence spans 166 residues: MLLEEVHAGDRLSGAAARGDVQEVRRLLHSELVHPDVLNRFGKTALQVMMFGSPTIALELLKQGASPNVQDASGTTPAHDAARTGFLDTLKVLVEHGADVNAPDGTGALPIHLAVREGHTSVVSFLATESDLHHRDATGLTPLELARGRGAQELMDILQRHTVAPL.

Position 1 is an N-acetylmethionine (Met1). 4 ANK repeats span residues 41–69 (FGKTALQVMMFGSPTIALELLKQGASPNV), 73–102 (SGTTPAHDAARTGFLDTLKVLVEHGADVNA), 106–135 (TGALPIHLAVREGHTSVVSFLATESDLHHR), and 138–166 (TGLTPLELARGRGAQELMDILQRHTVAPL).

The protein belongs to the CDKN2 cyclin-dependent kinase inhibitor family. Interacts with CDK6.

It localises to the nucleus. The protein resides in the cytoplasm. Interacts strongly with CDK4 and CDK6 and inhibits them. This Bos taurus (Bovine) protein is Cyclin-dependent kinase 4 inhibitor D (CDKN2D).